An 855-amino-acid polypeptide reads, in one-letter code: E3 ubiquitin-protein ligase TRIM71 (855 aa).

Ala-2 is subject to N-acetylalanine. The RING-type zinc-finger motif lies at Cys-12–Asp-94. Residues Ser-26–Ser-42 are compositionally biased toward low complexity. Disordered regions lie at residues Ser-26 to Pro-48 and Glu-127 to Ser-177. The span at Arg-135–Gly-145 shows a compositional bias: gly residues. Residues Ser-147 to Ala-157 are compositionally biased toward basic residues. Residues Arg-181 to Gly-228 form a B box-type 1; atypical zinc finger. The B box-type 2 zinc-finger motif lies at Glu-260–Leu-301. Positions 265, 268, 288, and 293 each coordinate Zn(2+). 2 coiled-coil regions span residues Gln-314–Lys-352 and Gln-378–Glu-411. One copy of the Filamin repeat lies at Ser-466 to Val-567. NHL repeat units lie at residues Gly-580 to Cys-623, His-627 to Glu-670, Leu-674 to Asp-717, Leu-721 to Asp-764, Ala-768 to Asn-811, and Leu-815 to Phe-855.

Belongs to the TRIM/RBCC family. Interacts (via NHL repeats) with AGO2; the interaction increases in presence of RNA. Interacts with HSP90AA1. Interacts (via NHL repeats) with MOV10, PABPC1, PUM1, PUM2, STAU2, XRN1 and XRN2 in an RNA-dependent manner. Interacts with SHCBP1; leading to enhance its stability. Post-translationally, autoubiquitinated. As to expression, highly expressed in undifferentiated embryonic stem cells (ESCs). Expressed in the epiblast and in interfollicular epidermal stem cells during early development. Also expressed in male germ cells and in the reproductive tract. Highly expressed in neuroepithelial cells, and its expression declines as neurogenesis proceeds (at protein level). Expressed in ependymal cells of the brain.

It is found in the cytoplasm. The protein localises to the P-body. It carries out the reaction S-ubiquitinyl-[E2 ubiquitin-conjugating enzyme]-L-cysteine + [acceptor protein]-L-lysine = [E2 ubiquitin-conjugating enzyme]-L-cysteine + N(6)-ubiquitinyl-[acceptor protein]-L-lysine.. It participates in protein modification; protein ubiquitination. E3 ubiquitin-protein ligase that cooperates with the microRNAs (miRNAs) machinery and promotes embryonic stem cells proliferation and maintenance. Binds to miRNAs and associates with AGO2, participating in post-transcriptional repression of transcripts such as CDKN1A. Facilitates the G1-S transition to promote rapid embryonic stem cell self-renewal by repressing CDKN1A expression. In addition, participates in post-transcriptional mRNA repression in a miRNA independent mechanism. Required to maintain proliferation and prevent premature differentiation of neural progenitor cells during early neural development: positively regulates FGF signaling by controlling the stability of SHCBP1. Specific regulator of miRNA biogenesis. miRNA Binds MIR29A hairpin and postranscriptionally modulates MIR29A levels, which indirectly regulates TET proteins expression. This is E3 ubiquitin-protein ligase TRIM71 (Trim71) from Mus musculus (Mouse).